The primary structure comprises 269 residues: 5'-nucleotidase SurE (269 aa).

A divalent metal cation is bound by residues Asp-11, Asp-12, Ser-43, and Asn-101.

It belongs to the SurE nucleotidase family. It depends on a divalent metal cation as a cofactor.

It is found in the cytoplasm. It catalyses the reaction a ribonucleoside 5'-phosphate + H2O = a ribonucleoside + phosphate. Its function is as follows. Nucleotidase that shows phosphatase activity on nucleoside 5'-monophosphates. The sequence is that of 5'-nucleotidase SurE from Synechococcus sp. (strain CC9902).